The sequence spans 371 residues: 3-dehydroquinate synthase (371 aa).

NAD(+)-binding positions include 114–118 (GVVGD), 138–139 (TT), Lys-151, Lys-160, and 178–181 (TLNT). Zn(2+) is bound by residues Glu-193, His-258, and His-275.

Belongs to the sugar phosphate cyclases superfamily. Dehydroquinate synthase family. Requires Co(2+) as cofactor. The cofactor is Zn(2+). NAD(+) serves as cofactor.

Its subcellular location is the cytoplasm. The enzyme catalyses 7-phospho-2-dehydro-3-deoxy-D-arabino-heptonate = 3-dehydroquinate + phosphate. Its pathway is metabolic intermediate biosynthesis; chorismate biosynthesis; chorismate from D-erythrose 4-phosphate and phosphoenolpyruvate: step 2/7. Functionally, catalyzes the conversion of 3-deoxy-D-arabino-heptulosonate 7-phosphate (DAHP) to dehydroquinate (DHQ). The chain is 3-dehydroquinate synthase from Synechococcus sp. (strain CC9605).